The following is a 69-amino-acid chain: Putative membrane protein insertion efficiency factor (69 aa).

The protein belongs to the UPF0161 family.

It localises to the cell membrane. In terms of biological role, could be involved in insertion of integral membrane proteins into the membrane. The sequence is that of Putative membrane protein insertion efficiency factor from Clostridium botulinum (strain 657 / Type Ba4).